The chain runs to 3961 residues: Hybrid PKS-NRPS synthetase phm1 (3961 aa).

Residues 4–436 form the Ketosynthase family 3 (KS3) domain; it reads SEPIAIIGSA…GTNAHAIVEA (433 aa). Active-site for beta-ketoacyl synthase activity residues include cysteine 178, histidine 317, and histidine 356. The interval 541–867 is malonyl-CoA:ACP transacylase (MAT) domain; sequence VFTGQGAQWP…RSKNDILELS (327 aa). Positions 933–1068 are N-terminal hotdog fold; that stretch reads HPILGKRCLE…GTVTVTLAEP (136 aa). Residues 933–1234 form a dehydratase (DH) domain region; it reads HPILGKRCLE…LELVPFTAAR (302 aa). The PKS/mFAS DH domain maps to 933–1236; sequence HPILGKRCLE…LVPFTAARPE (304 aa). Histidine 966 functions as the Proton acceptor; for dehydratase activity in the catalytic mechanism. The tract at residues 1083-1236 is C-terminal hotdog fold; it reads MTEIEVDRFY…LVPFTAARPE (154 aa). Aspartate 1143 (proton donor; for dehydratase activity) is an active-site residue. Positions 1376–1569 are methyltransferase (MT) domain; that stretch reads FDFYDQGLGL…GFGGIDTSTP (194 aa). Residues 2106–2277 form a ketoreductase (KR) domain region; sequence TYLLIGMSGQ…GVPGSAISIS (172 aa). The Carrier 1 domain maps to 2386–2464; that stretch reads QAATIIKDGF…ELLQEAMDRT (79 aa). Serine 2424 carries the post-translational modification O-(pantetheine 4'-phosphoryl)serine. Residues 2482–2527 are disordered; that stretch reads PVTNTATPPPEVQVTGSASDSSRSLTPDGLSTSRPSTPVRTPMTEI. The span at 2495 to 2520 shows a compositional bias: polar residues; the sequence is VTGSASDSSRSLTPDGLSTSRPSTPV. The segment at 2553 to 2993 is condensation (C) domain; that stretch reads PMSYGQARFW…DLPRWAGADV (441 aa). The adenylation (A) (KR) domain stretch occupies residues 3019 to 3424; the sequence is QMIGTYASKP…DGALFVHGRI (406 aa). Residues 3542–3616 enclose the Carrier 2 domain; the sequence is ANMEGRVAAL…GMARHVRAAF (75 aa). Residue serine 3576 is modified to O-(pantetheine 4'-phosphoryl)serine. Residues 3725-3871 are reductase (RED) domain; it reads ITDIVFHCAA…VRPVSDVATT (147 aa).

In the C-terminal section; belongs to the NRP synthetase family.

The protein operates within secondary metabolite biosynthesis. Hybrid PKS-NRPS synthetase; part of the gene cluster that mediates the biosynthesis of the trans-fused decalin-containing tetramic acid phomasetin, the stereochemical opposite of the HIV-1 integrase inhibitor equisetin. The PKS module of phm1 together with the enoylreductase phm4 catalyze the formation of the polyketide unit which is then conjugated to L-serine by the condensation domain of the phm1 NRPS module. Activity of the Dieckmann cyclase domain (RED) of phm1 results in release of the Dieckmann product intermediate. The Diels-Alderase phm7 then uses the Dieckmann product of phm1 as substrate and catalyzes the Diels-Alder cycloaddition to form the decalin ring of N-desmethylphomasetin. N-desmethylphomasetin is further methylated to phomasetin by the methyltransferase phm5. This is Hybrid PKS-NRPS synthetase phm1 from Pyrenochaetopsis sp.